The chain runs to 428 residues: Dihydroorotase (428 aa).

Zn(2+) contacts are provided by H59 and H61. Residues 61–63 (HFR) and N93 each bind substrate. Zn(2+) is bound by residues D151, H178, and H231. N277 is a substrate binding site. D304 contacts Zn(2+). D304 is an active-site residue. Residues H308 and 322–323 (FG) contribute to the substrate site.

This sequence belongs to the metallo-dependent hydrolases superfamily. DHOase family. Class I DHOase subfamily. Zn(2+) is required as a cofactor.

It catalyses the reaction (S)-dihydroorotate + H2O = N-carbamoyl-L-aspartate + H(+). The protein operates within pyrimidine metabolism; UMP biosynthesis via de novo pathway; (S)-dihydroorotate from bicarbonate: step 3/3. Its function is as follows. Catalyzes the reversible cyclization of carbamoyl aspartate to dihydroorotate. The chain is Dihydroorotase from Bacillus licheniformis (strain ATCC 14580 / DSM 13 / JCM 2505 / CCUG 7422 / NBRC 12200 / NCIMB 9375 / NCTC 10341 / NRRL NRS-1264 / Gibson 46).